Consider the following 222-residue polypeptide: Phosphoglycolate phosphatase (222 aa).

D8 acts as the Nucleophile in catalysis. Residues D8 and D10 each coordinate Mg(2+). K146 lines the substrate pocket. Mg(2+) contacts are provided by D169 and D173.

The protein belongs to the archaeal SPP-like hydrolase family. The cofactor is Mg(2+).

The catalysed reaction is 2-phosphoglycolate + H2O = glycolate + phosphate. Catalyzes the dephosphorylation of 2-phosphoglycolate. The protein is Phosphoglycolate phosphatase of Methanothrix thermoacetophila (strain DSM 6194 / JCM 14653 / NBRC 101360 / PT) (Methanosaeta thermophila).